The chain runs to 82 residues: MFFKKITLIPFVMLINLYRYCISPFIPARCRYYPTCSEYALEALKTHGILKGLYLTTRRLLRCHPLSKRDYYDPVPCKNKKG.

Belongs to the UPF0161 family.

Its subcellular location is the cell inner membrane. Functionally, could be involved in insertion of integral membrane proteins into the membrane. This Francisella tularensis subsp. novicida (strain U112) protein is Putative membrane protein insertion efficiency factor.